A 247-amino-acid chain; its full sequence is Flagellar brake protein YcgR 2 (247 aa).

Residues 124–237 (QRREYFRVET…DETRIQRYIA (114 aa)) enclose the PilZ domain.

Belongs to the YcgR family. Monomer. Interacts with the flagellar basal bodies.

The protein localises to the bacterial flagellum basal body. Acts as a flagellar brake, regulating swimming and swarming in a bis-(3'-5') cyclic diguanylic acid (c-di-GMP)-dependent manner. Binds 1 c-di-GMP dimer per subunit. Increasing levels of c-di-GMP lead to decreased motility. The sequence is that of Flagellar brake protein YcgR 2 from Dechloromonas aromatica (strain RCB).